A 160-amino-acid chain; its full sequence is Leptin (160 aa).

A signal peptide spans 1-17; sequence MDYTLALALSLLQLSMC. Cys-109 and Cys-160 are oxidised to a cystine.

It belongs to the leptin family.

Its subcellular location is the secreted. In terms of biological role, may function as part of a signaling pathway that acts to regulate the size of the body fat depot. This is Leptin (lep) from Tetraodon nigroviridis (Spotted green pufferfish).